The sequence spans 600 residues: Autophagy-related protein 22-2 (600 aa).

Residues 1–30 (MAFASPPASPPDEDGQARAPRYPGEDTTPT) form a disordered region. The next 4 helical transmembrane spans lie at 41 to 61 (YGIA…PLTL), 117 to 137 (SFAM…LISF), 149 to 168 (TLLV…FVFI), and 186 to 206 (CLGS…ASDP). Residues 234–257 (SFDGDEPTHRPPTGLGLGGATGTS) form a disordered region. A run of 4 helical transmembrane segments spans residues 271 to 291 (GVGL…LLLF), 304 to 324 (TLPL…FTMV), 378 to 398 (VIVF…VSGT), and 414 to 434 (VALL…LWPI). N-linked (GlcNAc...) asparagine glycosylation occurs at N444. Transmembrane regions (helical) follow at residues 449–469 (VCIA…IPLF), 484–506 (YPLA…SFFG), 526–546 (KGSS…TGQV), and 549–569 (GFFF…MVDA).

This sequence belongs to the ATG22 family.

It is found in the vacuole membrane. Functionally, vacuolar effluxer which mediate the efflux of amino acids resulting from autophagic degradation. The release of autophagic amino acids allows the maintenance of protein synthesis and viability during nitrogen starvation. The protein is Autophagy-related protein 22-2 (atg22-2) of Aspergillus niger (strain ATCC MYA-4892 / CBS 513.88 / FGSC A1513).